The sequence spans 250 residues: Probable transcriptional regulatory protein Cpha266_0538 (250 aa).

This sequence belongs to the TACO1 family.

The protein localises to the cytoplasm. The polypeptide is Probable transcriptional regulatory protein Cpha266_0538 (Chlorobium phaeobacteroides (strain DSM 266 / SMG 266 / 2430)).